Here is a 163-residue protein sequence, read N- to C-terminus: Large ribosomal subunit protein bL21 (163 aa).

Residues Lys-124–Asp-163 form a disordered region.

It belongs to the bacterial ribosomal protein bL21 family. Part of the 50S ribosomal subunit. Contacts protein L20.

In terms of biological role, this protein binds to 23S rRNA in the presence of protein L20. This chain is Large ribosomal subunit protein bL21, found in Bartonella quintana (strain Toulouse) (Rochalimaea quintana).